Reading from the N-terminus, the 391-residue chain is Lysophosphatidylinositol acyltransferase 10 (391 aa).

The next 5 membrane-spanning stretches (helical) occupy residues 10-30, 52-72, 97-119, 323-343, and 347-367; these read LLGWFFGLCILFSALFGNYII, AISYWMTIPMGLLEFLMGVRI, WMYMWCALYQINPWLITSNKISL, LTSLMFWTLVISFCSYHIFFV, and QLGFLYFFVISFYLSWRYGGI.

Belongs to the 1-acyl-sn-glycerol-3-phosphate acyltransferase family. Expressed in seam cells, vulval epithelial cells and the major epithelial syncytium hyp7, and in several head neurons including AIY interneurons.

It localises to the endoplasmic reticulum membrane. It catalyses the reaction a 2-acyl-sn-glycero-3-phospho-D-myo-inositol + an acyl-CoA = a 1,2-diacyl-sn-glycero-3-phospho-(1D-myo-inositol) + CoA. It carries out the reaction a 2-acyl-sn-glycero-3-phospho-D-myo-inositol + octadecanoyl-CoA = 1-octadecanoyl-2-acyl-sn-glycero-3-phospho-1D-myo-inositol + CoA. Its pathway is phospholipid metabolism; phosphatidylinositol metabolism. Its function is as follows. Acyltransferase required for the fatty acid remodeling of phosphatidylinositol (1,2-diacyl-sn-glycero-3-phosphoinositol or PI). Mediates the conversion of lysophosphatidylinositol (2-acylglycerophosphatidylinositol or LPI) into PI (LPIAT activity). Has preference for saturated and mono-unsaturated fatty acids as acyl donors and sn-2-acyl lysoPI (2-acyl-sn-glycero-3-phospho-D-myo-inositol) as acyl acceptor. Contributes to the asymmetric cell division of epithelial cells. Asymmetric cell division is the fundamental mechanism by which multicellular organisms generate cell diversity. The sequence is that of Lysophosphatidylinositol acyltransferase 10 from Caenorhabditis elegans.